We begin with the raw amino-acid sequence, 293 residues long: Mitochondrial glycine transporter (293 aa).

Solcar repeat units lie at residues 6 to 85 (GGVP…SRSA), 102 to 186 (LQSY…AKEM), and 208 to 291 (ASAM…LLKL). A run of 6 helical transmembrane segments spans residues 12-37 (LVSG…TRLQ), 60-86 (GTLP…RSAL), 108-133 (LLTG…VRYE), 161-184 (GAAA…EQAK), 212-238 (VNGV…KTRM), and 266-284 (GLSL…AWGI).

This sequence belongs to the mitochondrial carrier (TC 2.A.29) family. SLC25A38 subfamily.

The protein resides in the mitochondrion inner membrane. It carries out the reaction glycine(in) = glycine(out). Its function is as follows. Mitochondrial glycine transporter that imports glycine into the mitochondrial matrix. Plays an important role in providing glycine for the first enzymatic step in heme biosynthesis, the condensation of glycine with succinyl-CoA to produce 5-aminolevulinate (ALA) in the mitochondrial matrix. The polypeptide is Mitochondrial glycine transporter (Eremothecium gossypii (strain ATCC 10895 / CBS 109.51 / FGSC 9923 / NRRL Y-1056) (Yeast)).